The chain runs to 364 residues: Cobalt-precorrin-5B C(1)-methyltransferase (364 aa).

This sequence belongs to the CbiD family.

The enzyme catalyses Co-precorrin-5B + S-adenosyl-L-methionine = Co-precorrin-6A + S-adenosyl-L-homocysteine. It functions in the pathway cofactor biosynthesis; adenosylcobalamin biosynthesis; cob(II)yrinate a,c-diamide from sirohydrochlorin (anaerobic route): step 6/10. Catalyzes the methylation of C-1 in cobalt-precorrin-5B to form cobalt-precorrin-6A. This chain is Cobalt-precorrin-5B C(1)-methyltransferase, found in Pseudomonas putida (strain ATCC 47054 / DSM 6125 / CFBP 8728 / NCIMB 11950 / KT2440).